We begin with the raw amino-acid sequence, 200 residues long: MTVVIGLTGGIASGKSTVSQMFRELSIPVIDADIIAREVVERGKPAYNKIVEVFGTEVLQEDGELDRPKLGSVVFYNEEKRLQLNKIVHPAVREEMNRQKEMYIKEGMQAVVLDIPLLFESKLTSLVDRILVVAVKPHTQLERLMKRNNFLEEEATARIQSQMPLEEKVKNADEVINNDGTIMGTKTQLQVILKKWNIID.

The DPCK domain occupies 4–200; the sequence is VIGLTGGIAS…VILKKWNIID (197 aa). 12 to 17 is an ATP binding site; that stretch reads ASGKST.

Belongs to the CoaE family.

It is found in the cytoplasm. It carries out the reaction 3'-dephospho-CoA + ATP = ADP + CoA + H(+). The protein operates within cofactor biosynthesis; coenzyme A biosynthesis; CoA from (R)-pantothenate: step 5/5. Its function is as follows. Catalyzes the phosphorylation of the 3'-hydroxyl group of dephosphocoenzyme A to form coenzyme A. In Bacillus cereus (strain ATCC 14579 / DSM 31 / CCUG 7414 / JCM 2152 / NBRC 15305 / NCIMB 9373 / NCTC 2599 / NRRL B-3711), this protein is Dephospho-CoA kinase.